The following is a 578-amino-acid chain: tRNA (guanine(26)-N(2))-dimethyltransferase (578 aa).

The Trm1 methyltransferase domain maps to 18–451; it reads NVIRERNAEI…APPAVLWDIL (434 aa). Position 43 (Arg-43) interacts with S-adenosyl-L-methionine. The interval 63–92 is disordered; that stretch reads EKALKKQRKKVKEQEDEKTTPVPEDPPVYE. 2 residues coordinate S-adenosyl-L-methionine: Arg-113 and Asp-131. Zn(2+) is bound by residues Cys-295, Cys-298, Cys-335, and Cys-338. Residues 491-578 are disordered; the sequence is EANPKSRKSA…PKQPKLEATA (88 aa). Basic and acidic residues predominate over residues 564–578; the sequence is DVEHLPKQPKLEATA.

It belongs to the class I-like SAM-binding methyltransferase superfamily. Trm1 family.

It carries out the reaction guanosine(26) in tRNA + 2 S-adenosyl-L-methionine = N(2)-dimethylguanosine(26) in tRNA + 2 S-adenosyl-L-homocysteine + 2 H(+). Functionally, dimethylates a single guanine residue at position 26 of most tRNAs using S-adenosyl-L-methionine as donor of the methyl groups. This is tRNA (guanine(26)-N(2))-dimethyltransferase from Drosophila melanogaster (Fruit fly).